Reading from the N-terminus, the 357-residue chain is Glutamate 5-kinase (357 aa).

K7 provides a ligand contact to ATP. Residues S43, D130, and N142 each coordinate substrate. Residues 162–163 (TD) and 205–211 (TGGMTTK) contribute to the ATP site. In terms of domain architecture, PUA spans 270 to 353 (EGELQLDAGA…PVVVHRDGLV (84 aa)).

This sequence belongs to the glutamate 5-kinase family.

The protein localises to the cytoplasm. The enzyme catalyses L-glutamate + ATP = L-glutamyl 5-phosphate + ADP. It functions in the pathway amino-acid biosynthesis; L-proline biosynthesis; L-glutamate 5-semialdehyde from L-glutamate: step 1/2. Functionally, catalyzes the transfer of a phosphate group to glutamate to form L-glutamate 5-phosphate. In Synechococcus sp. (strain CC9605), this protein is Glutamate 5-kinase.